Consider the following 267-residue polypeptide: 4-hydroxy-tetrahydrodipicolinate reductase (267 aa).

NAD(+) contacts are provided by residues glycine 8–methionine 13 and glutamate 34. An NADP(+)-binding site is contributed by arginine 35. Residues glycine 98–threonine 100 and alanine 122–methionine 125 each bind NAD(+). Histidine 155 (proton donor/acceptor) is an active-site residue. Histidine 156 is a (S)-2,3,4,5-tetrahydrodipicolinate binding site. Lysine 159 (proton donor) is an active-site residue. A (S)-2,3,4,5-tetrahydrodipicolinate-binding site is contributed by glycine 165–threonine 166.

The protein belongs to the DapB family.

It localises to the cytoplasm. The enzyme catalyses (S)-2,3,4,5-tetrahydrodipicolinate + NAD(+) + H2O = (2S,4S)-4-hydroxy-2,3,4,5-tetrahydrodipicolinate + NADH + H(+). The catalysed reaction is (S)-2,3,4,5-tetrahydrodipicolinate + NADP(+) + H2O = (2S,4S)-4-hydroxy-2,3,4,5-tetrahydrodipicolinate + NADPH + H(+). It participates in amino-acid biosynthesis; L-lysine biosynthesis via DAP pathway; (S)-tetrahydrodipicolinate from L-aspartate: step 4/4. Functionally, catalyzes the conversion of 4-hydroxy-tetrahydrodipicolinate (HTPA) to tetrahydrodipicolinate. This Geotalea daltonii (strain DSM 22248 / JCM 15807 / FRC-32) (Geobacter daltonii) protein is 4-hydroxy-tetrahydrodipicolinate reductase.